A 176-amino-acid chain; its full sequence is Transmembrane protein 238 (176 aa).

The disordered stretch occupies residues 1 to 22; the sequence is MAAAPAVCASQGSPPGAPSAPA. Residues 1–36 lie on the Cytoplasmic side of the membrane; sequence MAAAPAVCASQGSPPGAPSAPAAAPAPAAGLGRCRM. A compositionally biased stretch (low complexity) spans 9–22; sequence ASQGSPPGAPSAPA. Residues 37–57 traverse the membrane as a helical segment; that stretch reads ALLLAVALDVAGMAALLTGVF. The Extracellular segment spans residues 58-69; sequence AQLQVRGRDFGD. Residues 70-90 form a helical membrane-spanning segment; the sequence is LLIYSGALLVFLSLLGWILWY. Residues 91–176 are Cytoplasmic-facing; it reads TGNIEISRQE…GPGAAGAGSE (86 aa). The segment covering 124 to 137 has biased composition (low complexity); it reads SAPAAAGQRPAPGS. The tract at residues 124–157 is disordered; it reads SAPAAAGQRPAPGSRRARRAARAPPPPAAGSRRV. S175 carries the phosphoserine modification.

The protein localises to the membrane. This chain is Transmembrane protein 238 (TMEM238), found in Homo sapiens (Human).